Here is a 196-residue protein sequence, read N- to C-terminus: CASP-like protein 1D1 (196 aa).

The segment covering 1–18 (MASTDKPDRESIKSEEAP) has biased composition (basic and acidic residues). The segment at 1 to 22 (MASTDKPDRESIKSEEAPAAHP) is disordered. Residues 1-29 (MASTDKPDRESIKSEEAPAAHPRRSNYSS) are Cytoplasmic-facing. The chain crosses the membrane as a helical span at residues 30-50 (VHVALRFLLFAASVTAVVVMV). Topologically, residues 51–84 (TAKQTKIVPVPGLPISVPLEAKFSDSPAFLYFIS) are extracellular. A helical transmembrane segment spans residues 85 to 105 (ALSVAGLYGILTTLAAISIVL). Over 106–112 (KPAYATR) the chain is Cytoplasmic. The helical transmembrane segment at 113 to 133 (FLLHFALLDVLMLGIVASATG) threads the bilayer. At 134–167 (AAGGVAYVGLKGNSHVRWGKVCNVYDKFCQHVGS) the chain is on the extracellular side. A helical transmembrane segment spans residues 168 to 188 (SIAVALFASVLLVLLTMLSVF). Topologically, residues 189–196 (SIYRKIPK) are cytoplasmic.

It belongs to the Casparian strip membrane proteins (CASP) family. As to quaternary structure, homodimer and heterodimers.

The protein resides in the cell membrane. This chain is CASP-like protein 1D1, found in Populus trichocarpa (Western balsam poplar).